The sequence spans 433 residues: Histidinol dehydrogenase 2 (433 aa).

Tyrosine 130, glutamine 192, and asparagine 215 together coordinate NAD(+). Residues serine 238, glutamine 260, and histidine 263 each contribute to the substrate site. Zn(2+) contacts are provided by glutamine 260 and histidine 263. Catalysis depends on proton acceptor residues glutamate 328 and histidine 329. Positions 329, 362, 416, and 421 each coordinate substrate. Aspartate 362 lines the Zn(2+) pocket. Histidine 421 contacts Zn(2+).

The protein belongs to the histidinol dehydrogenase family. Requires Zn(2+) as cofactor.

It carries out the reaction L-histidinol + 2 NAD(+) + H2O = L-histidine + 2 NADH + 3 H(+). It participates in amino-acid biosynthesis; L-histidine biosynthesis; L-histidine from 5-phospho-alpha-D-ribose 1-diphosphate: step 9/9. Functionally, catalyzes the sequential NAD-dependent oxidations of L-histidinol to L-histidinaldehyde and then to L-histidine. This is Histidinol dehydrogenase 2 from Trichormus variabilis (strain ATCC 29413 / PCC 7937) (Anabaena variabilis).